We begin with the raw amino-acid sequence, 287 residues long: Protein TMEPAI (287 aa).

The Lumenal portion of the chain corresponds to 1-40 (MHRLMGVNSTAAAAAGQPNVSCTCNCKRSLFQSMEITELE). The helical transmembrane segment at 41 to 63 (FVQIIIIVVVMMVMVVVITCLLS) threads the bilayer. At 64-287 (HYKLSARSFI…EKDKQKGHPL (224 aa)) the chain is on the cytoplasmic side. A PPxY motif 1 motif is present at residues 158-161 (PPPY). The short motif at 186–189 (PPNR) is the SMAD interaction motif (SIM) element. The PPxY motif 2 motif lies at 229–232 (PPTY). The disordered stretch occupies residues 239-258 (YPGSSFQHQQSSGPPSLLEG). Polar residues predominate over residues 242-252 (SSFQHQQSSGP).

It belongs to the PMEPA1 family. In terms of assembly, interacts with NEDD4 (via PPxY motifs). Interacts with AR. Interacts with LDLRAD4. Interacts (via the SMAD interaction motif) with SMAD2 and SMAD3. In terms of tissue distribution, highest expression in prostate. Also expressed in ovary.

Its subcellular location is the early endosome membrane. It is found in the golgi apparatus membrane. In terms of biological role, functions as a negative regulator of TGF-beta signaling and thereby probably plays a role in cell proliferation, differentiation, apoptosis, motility, extracellular matrix production and immunosuppression. In the canonical TGF-beta pathway, ZFYVE9/SARA recruits the intracellular signal transducer and transcriptional modulators SMAD2 and SMAD3 to the TGF-beta receptor. Phosphorylated by the receptor, SMAD2 and SMAD3 then form a heteromeric complex with SMAD4 that translocates to the nucleus to regulate transcription. Through interaction with SMAD2 and SMAD3, LDLRAD4 may compete with ZFYVE9 and SMAD4 and prevent propagation of the intracellular signal. Also involved in down-regulation of the androgen receptor (AR), enhancing ubiquitination and proteasome-mediated degradation of AR, probably by recruiting NEDD4. This Homo sapiens (Human) protein is Protein TMEPAI (PMEPA1).